Reading from the N-terminus, the 341-residue chain is Chorismate synthase (341 aa).

Disordered regions lie at residues 45-64 and 109-134; these read LERR…GRQE and HADD…GRET. Arginine 48 provides a ligand contact to NADP(+). FMN-binding positions include 128-130, glycine 280, 295-299, and arginine 308; these read RSS and KPTSS.

This sequence belongs to the chorismate synthase family. In terms of assembly, homotetramer. FMNH2 is required as a cofactor.

The catalysed reaction is 5-O-(1-carboxyvinyl)-3-phosphoshikimate = chorismate + phosphate. The protein operates within metabolic intermediate biosynthesis; chorismate biosynthesis; chorismate from D-erythrose 4-phosphate and phosphoenolpyruvate: step 7/7. Its function is as follows. Catalyzes the anti-1,4-elimination of the C-3 phosphate and the C-6 proR hydrogen from 5-enolpyruvylshikimate-3-phosphate (EPSP) to yield chorismate, which is the branch point compound that serves as the starting substrate for the three terminal pathways of aromatic amino acid biosynthesis. This reaction introduces a second double bond into the aromatic ring system. This Bdellovibrio bacteriovorus (strain ATCC 15356 / DSM 50701 / NCIMB 9529 / HD100) protein is Chorismate synthase.